The primary structure comprises 619 residues: ATP-dependent zinc metalloprotease FtsH 1 (619 aa).

Topologically, residues 1–8 (MADEKRPA) are cytoplasmic. Residues 9–29 (SRAWLGYLLIAVGILVLSGIV) form a helical membrane-spanning segment. At 30-108 (RSRGRPLVPY…RIEAKSPQTS (79 aa)) the chain is on the periplasmic side. A helical transmembrane segment spans residues 109 to 129 (VWMQVAIWMLPLVLINAAFFM). The Cytoplasmic segment spans residues 130 to 619 (MLRRAGQGAG…KIAVGPPSAA (490 aa)). 203–210 (GPPGTGKT) provides a ligand contact to ATP. His-426 serves as a coordination point for Zn(2+). Glu-427 is an active-site residue. The Zn(2+) site is built by His-430 and Asp-503.

The protein in the central section; belongs to the AAA ATPase family. It in the C-terminal section; belongs to the peptidase M41 family. Homohexamer. It depends on Zn(2+) as a cofactor.

The protein localises to the cell inner membrane. In terms of biological role, acts as a processive, ATP-dependent zinc metallopeptidase for both cytoplasmic and membrane proteins. Plays a role in the quality control of integral membrane proteins. This chain is ATP-dependent zinc metalloprotease FtsH 1, found in Sorangium cellulosum (strain So ce56) (Polyangium cellulosum (strain So ce56)).